Reading from the N-terminus, the 296-residue chain is Pyridoxine/pyridoxal/pyridoxamine kinase (296 aa).

Ser23 and His59 together coordinate substrate. An ATP-binding site is contributed by Asp125. Tyr136 contributes to the Mg(2+) binding site. ATP is bound by residues Thr157, Glu162, Thr195, 222–225, and Thr232; that span reads HQRV. Residue Glu162 participates in Mg(2+) binding. Asp234 serves as a coordination point for substrate.

It belongs to the pyridoxine kinase family. PdxK subfamily. Homodimer. Requires Mg(2+) as cofactor.

The catalysed reaction is pyridoxal + ATP = pyridoxal 5'-phosphate + ADP + H(+). It carries out the reaction pyridoxine + ATP = pyridoxine 5'-phosphate + ADP + H(+). It catalyses the reaction pyridoxamine + ATP = pyridoxamine 5'-phosphate + ADP + H(+). It participates in cofactor metabolism; pyridoxal 5'-phosphate salvage; pyridoxal 5'-phosphate from pyridoxal: step 1/1. Its pathway is cofactor metabolism; pyridoxal 5'-phosphate salvage; pyridoxine 5'-phosphate from pyridoxine: step 1/1. The protein operates within cofactor metabolism; pyridoxal 5'-phosphate salvage; pyridoxamine 5'-phosphate from pyridoxamine: step 1/1. In terms of biological role, B6-vitamer kinase involved in the salvage pathway of pyridoxal 5'-phosphate (PLP). Catalyzes the phosphorylation of pyridoxine (PN), pyridoxal (PL), and pyridoxamine (PM), forming their respective 5'-phosphorylated esters, i.e. PNP, PLP and PMP. The protein is Pyridoxine/pyridoxal/pyridoxamine kinase of Bordetella avium (strain 197N).